We begin with the raw amino-acid sequence, 468 residues long: Flavin-containing monooxygenase FMO GS-OX-like 1 (468 aa).

16–21 (GLGAAG) contacts FAD. 211-216 (GSQASG) lines the NADP(+) pocket.

It belongs to the FMO family. FAD is required as a cofactor.

Functionally, catalyzes the conversion of methylthioalkyl glucosinolates of any chain length into methylsulfinylalkyl glucosinolates. This chain is Flavin-containing monooxygenase FMO GS-OX-like 1, found in Arabidopsis thaliana (Mouse-ear cress).